The sequence spans 185 residues: HTH-type transcriptional regulator Hpr (185 aa).

The HTH marR-type domain occupies 13 to 157 (AMIFSQRIAQ…LIAILRNIYG (145 aa)). Positions 63-86 (ISEIAKFGVMHVSTAFNFSKKLEE) form a DNA-binding region, H-T-H motif.

As to quaternary structure, homodimer.

Its function is as follows. Negative regulator of protease production and sporulation. This chain is HTH-type transcriptional regulator Hpr, found in Bacillus cytotoxicus (strain DSM 22905 / CIP 110041 / 391-98 / NVH 391-98).